Reading from the N-terminus, the 398-residue chain is Chorismate synthase (398 aa).

Residues R44 and R50 each coordinate NADP(+). FMN-binding positions include 133–135, 261–262, G306, 321–325, and R347; these read RAS, QA, and KPIPT.

It belongs to the chorismate synthase family. Homotetramer. Requires FMNH2 as cofactor.

The catalysed reaction is 5-O-(1-carboxyvinyl)-3-phosphoshikimate = chorismate + phosphate. It participates in metabolic intermediate biosynthesis; chorismate biosynthesis; chorismate from D-erythrose 4-phosphate and phosphoenolpyruvate: step 7/7. Catalyzes the anti-1,4-elimination of the C-3 phosphate and the C-6 proR hydrogen from 5-enolpyruvylshikimate-3-phosphate (EPSP) to yield chorismate, which is the branch point compound that serves as the starting substrate for the three terminal pathways of aromatic amino acid biosynthesis. This reaction introduces a second double bond into the aromatic ring system. This chain is Chorismate synthase, found in Aquifex aeolicus (strain VF5).